The following is a 224-amino-acid chain: Ribosomal RNA small subunit methyltransferase G (224 aa).

Residues Gly89, Phe94, 140–141 (AE), and Arg153 contribute to the S-adenosyl-L-methionine site.

This sequence belongs to the methyltransferase superfamily. RNA methyltransferase RsmG family.

The protein resides in the cytoplasm. In terms of biological role, specifically methylates the N7 position of a guanine in 16S rRNA. In Bacteroides fragilis (strain YCH46), this protein is Ribosomal RNA small subunit methyltransferase G.